Reading from the N-terminus, the 96-residue chain is Integration host factor subunit beta (96 aa).

Positions 59–78 (RVGRNPKTGETVSLPGKYVP) are disordered.

Belongs to the bacterial histone-like protein family. In terms of assembly, heterodimer of an alpha and a beta chain.

This protein is one of the two subunits of integration host factor, a specific DNA-binding protein that functions in genetic recombination as well as in transcriptional and translational control. The polypeptide is Integration host factor subunit beta (Thioalkalivibrio sulfidiphilus (strain HL-EbGR7)).